Reading from the N-terminus, the 297-residue chain is 33 kDa chaperonin (297 aa).

Cystine bridges form between Cys232–Cys234 and Cys266–Cys269.

This sequence belongs to the HSP33 family. Post-translationally, under oxidizing conditions two disulfide bonds are formed involving the reactive cysteines. Under reducing conditions zinc is bound to the reactive cysteines and the protein is inactive.

It localises to the cytoplasm. Redox regulated molecular chaperone. Protects both thermally unfolding and oxidatively damaged proteins from irreversible aggregation. Plays an important role in the bacterial defense system toward oxidative stress. The protein is 33 kDa chaperonin of Pseudomonas aeruginosa (strain UCBPP-PA14).